The chain runs to 103 residues: uncharacterized protein (103 aa).

Disordered regions lie at residues 1–20 and 44–71; these read MIEL…WPKG and LERM…HHLG. The first 34 residues, 1-34, serve as a signal peptide directing secretion; it reads MIELSYAPDVAGRRSNWPKGSGVNTWTAIRWTFA.

This is an uncharacterized protein from Mycobacterium tuberculosis (strain CDC 1551 / Oshkosh).